The primary structure comprises 554 residues: Formate--tetrahydrofolate ligase (554 aa).

67–74 is an ATP binding site; the sequence is TPTGEGKT.

The protein belongs to the formate--tetrahydrofolate ligase family.

The enzyme catalyses (6S)-5,6,7,8-tetrahydrofolate + formate + ATP = (6R)-10-formyltetrahydrofolate + ADP + phosphate. The protein operates within one-carbon metabolism; tetrahydrofolate interconversion. This is Formate--tetrahydrofolate ligase from Finegoldia magna (strain ATCC 29328 / DSM 20472 / WAL 2508) (Peptostreptococcus magnus).